The following is a 580-amino-acid chain: 2-succinyl-5-enolpyruvyl-6-hydroxy-3-cyclohexene-1-carboxylate synthase (580 aa).

The protein belongs to the TPP enzyme family. MenD subfamily. In terms of assembly, homodimer. Mg(2+) serves as cofactor. Mn(2+) is required as a cofactor. The cofactor is thiamine diphosphate.

The catalysed reaction is isochorismate + 2-oxoglutarate + H(+) = 5-enolpyruvoyl-6-hydroxy-2-succinyl-cyclohex-3-ene-1-carboxylate + CO2. It functions in the pathway quinol/quinone metabolism; 1,4-dihydroxy-2-naphthoate biosynthesis; 1,4-dihydroxy-2-naphthoate from chorismate: step 2/7. The protein operates within quinol/quinone metabolism; menaquinone biosynthesis. Its function is as follows. Catalyzes the thiamine diphosphate-dependent decarboxylation of 2-oxoglutarate and the subsequent addition of the resulting succinic semialdehyde-thiamine pyrophosphate anion to isochorismate to yield 2-succinyl-5-enolpyruvyl-6-hydroxy-3-cyclohexene-1-carboxylate (SEPHCHC). The polypeptide is 2-succinyl-5-enolpyruvyl-6-hydroxy-3-cyclohexene-1-carboxylate synthase (Bacillus pumilus (strain SAFR-032)).